The following is a 734-amino-acid chain: Mechanosensitive ion channel protein 10 (734 aa).

Disordered regions lie at residues 1–75 and 115–136; these read MAEQ…LTQR and SFSR…APVT. A compositionally biased stretch (basic and acidic residues) spans 24–39; that stretch reads EASRRSKEMASPESEK. S34 is subject to Phosphoserine. Polar residues-rich tracts occupy residues 65–75 and 117–129; these read PNQNNVGLTQR and SRAS…NRSV. A phosphoserine mark is found at S128 and S131. The next 6 membrane-spanning stretches (helical) occupy residues 164-184, 196-216, 249-269, 288-308, 516-536, and 551-571; these read ISTL…ALVA, FWGL…SGML, SVQV…LFNH, LISI…LKIL, LVTA…LEVA, and LAFI…FVFV.

This sequence belongs to the MscS (TC 1.A.23) family. In terms of tissue distribution, detected in the root tip and throughout the vasculature of the root and leaf.

The protein resides in the cell membrane. In terms of biological role, mechanosensitive channel that opens in response to stretch forces in the membrane lipid bilayer. In Arabidopsis thaliana (Mouse-ear cress), this protein is Mechanosensitive ion channel protein 10 (MSL10).